We begin with the raw amino-acid sequence, 733 residues long: mRNA 3'-end-processing protein rna14 (733 aa).

The interval 1 to 45 (MNSDDNVEADASSNIIKDSPKIKEQENTSTVNESDVLATSTTASS) is disordered. Polar residues predominate over residues 27 to 45 (NTSTVNESDVLATSTTASS). 6 HAT repeats span residues 85-117 (GKHEELRETYEQMLRPFPYVPRVWVDYISSELA), 119-150 (NDFHAVELLFSRCLVKVLSVDLWTLYLSYIRR), 158-193 (QSRSTITQAYEFVINTIGVDILSGPIWSEFVDFLRS), 204-237 (QKLDHVRRIYQRAITTPIHNIEKLWRDYDAFENS), 269-302 (EGLRVYDFTFERKYTKVERIAYSRWMNWIKWEQS), and 312-344 (MLQNRIAYAFEQAMLYVPLCPQIWLDGFSYFLS). The segment covering 404-414 (DSKASSSSESS) has biased composition (low complexity). Residues 404 to 425 (DSKASSSSESSTDGNPQEKKLP) are disordered. One copy of the HAT 7 repeat lies at 523–557 (NDETNARALFEKAIPRIAADEAKPIYQKWLDYESN).

The protein localises to the nucleus. It localises to the cytoplasm. Its function is as follows. Component of the cleavage factor IA (CFIA) complex, which is involved in the endonucleolytic cleavage during polyadenylation-dependent pre-mRNA 3'-end formation. The chain is mRNA 3'-end-processing protein rna14 (rna14) from Schizosaccharomyces pombe (strain 972 / ATCC 24843) (Fission yeast).